The primary structure comprises 380 residues: DNA replication and repair protein RecF (380 aa).

30–37 contacts ATP; sequence GNNAQGKS.

Belongs to the RecF family.

It is found in the cytoplasm. In terms of biological role, the RecF protein is involved in DNA metabolism; it is required for DNA replication and normal SOS inducibility. RecF binds preferentially to single-stranded, linear DNA. It also seems to bind ATP. The polypeptide is DNA replication and repair protein RecF (Crocosphaera subtropica (strain ATCC 51142 / BH68) (Cyanothece sp. (strain ATCC 51142))).